The primary structure comprises 691 residues: Elongation factor G (691 aa).

In terms of domain architecture, tr-type G spans 8–282 (EKTRNIGIMA…AVVDYLPSPV (275 aa)). GTP-binding positions include 17 to 24 (AHIDAGKT), 81 to 85 (DTPGH), and 135 to 138 (NKMD).

It belongs to the TRAFAC class translation factor GTPase superfamily. Classic translation factor GTPase family. EF-G/EF-2 subfamily.

It localises to the cytoplasm. Catalyzes the GTP-dependent ribosomal translocation step during translation elongation. During this step, the ribosome changes from the pre-translocational (PRE) to the post-translocational (POST) state as the newly formed A-site-bound peptidyl-tRNA and P-site-bound deacylated tRNA move to the P and E sites, respectively. Catalyzes the coordinated movement of the two tRNA molecules, the mRNA and conformational changes in the ribosome. This chain is Elongation factor G, found in Caldicellulosiruptor bescii (strain ATCC BAA-1888 / DSM 6725 / KCTC 15123 / Z-1320) (Anaerocellum thermophilum).